A 62-amino-acid chain; its full sequence is Large ribosomal subunit protein uL29 (62 aa).

It belongs to the universal ribosomal protein uL29 family.

In Helicobacter hepaticus (strain ATCC 51449 / 3B1), this protein is Large ribosomal subunit protein uL29.